A 265-amino-acid polypeptide reads, in one-letter code: Tryptophan synthase alpha chain (265 aa).

Residues E49 and D60 each act as proton acceptor in the active site.

It belongs to the TrpA family. As to quaternary structure, tetramer of two alpha and two beta chains.

It carries out the reaction (1S,2R)-1-C-(indol-3-yl)glycerol 3-phosphate + L-serine = D-glyceraldehyde 3-phosphate + L-tryptophan + H2O. The protein operates within amino-acid biosynthesis; L-tryptophan biosynthesis; L-tryptophan from chorismate: step 5/5. The alpha subunit is responsible for the aldol cleavage of indoleglycerol phosphate to indole and glyceraldehyde 3-phosphate. This chain is Tryptophan synthase alpha chain, found in Paracoccus denitrificans (strain Pd 1222).